We begin with the raw amino-acid sequence, 117 residues long: UPF0295 protein YgzB (117 aa).

The next 2 membrane-spanning stretches (helical) occupy residues 13-33 and 41-61; these read TFAL…IFFK and LFMI…FWIG.

The protein belongs to the UPF0295 family.

The protein resides in the cell membrane. This Bacillus subtilis (strain 168) protein is UPF0295 protein YgzB (ygzB).